The following is a 439-amino-acid chain: (p)ppApp synthetase toxin Tas1 (439 aa).

The protein resides in the secreted. It catalyses the reaction AMP + ATP = adenosine 3'-diphosphate,5'-phosphate + AMP + H(+). The catalysed reaction is ADP + ATP = adenosine 3'-diphosphate,5'-diphosphate + AMP. It carries out the reaction 2 ATP = adenosine 3'-diphosphate,5'-triphosphate + AMP. In terms of biological role, type VI secretion exported toxin that pyrophosphorylates adenosine nucleotides to produce (p)ppApp. Thereby, depletes cellular ADP and ATP to dysregulate central metabolism in competitor cells. This is (p)ppApp synthetase toxin Tas1 (tas1) from Pseudomonas aeruginosa (strain UCBPP-PA14).